We begin with the raw amino-acid sequence, 353 residues long: Aromatic amino acid aminotransferase (353 aa).

Lysine 217 is modified (N6-(pyridoxal phosphate)lysine).

The protein belongs to the class-II pyridoxal-phosphate-dependent aminotransferase family. As to quaternary structure, homodimer. Pyridoxal 5'-phosphate serves as cofactor.

It catalyses the reaction an aromatic L-alpha-amino acid + 2-oxoglutarate = an aromatic oxo-acid + L-glutamate. Aminotransferase that catalyzes the conversion of aromatic amino acids and 2-oxoglutarate into corresponding aromatic oxo acids and L-glutamate. The chain is Aromatic amino acid aminotransferase from Mycobacterium bovis (strain ATCC BAA-935 / AF2122/97).